The chain runs to 156 residues: Small ribosomal subunit protein uS7 (156 aa).

This sequence belongs to the universal ribosomal protein uS7 family. As to quaternary structure, part of the 30S ribosomal subunit. Contacts proteins S9 and S11.

In terms of biological role, one of the primary rRNA binding proteins, it binds directly to 16S rRNA where it nucleates assembly of the head domain of the 30S subunit. Is located at the subunit interface close to the decoding center, probably blocks exit of the E-site tRNA. The protein is Small ribosomal subunit protein uS7 of Erwinia tasmaniensis (strain DSM 17950 / CFBP 7177 / CIP 109463 / NCPPB 4357 / Et1/99).